The primary structure comprises 227 residues: CDP-diacylglycerol--inositol 3-phosphatidyltransferase 1 (227 aa).

A run of 2 helical transmembrane segments spans residues 12 to 36 (LSVY…AFAV) and 42 to 61 (PLFS…DGWV). Aspartate 55 and aspartate 58 together coordinate Mg(2+). Residues glycine 59, arginine 63, and serine 69 each coordinate a CDP-1,2-diacyl-sn-glycerol. Helical transmembrane passes span 73–95 (AVLD…SQIY), 101–122 (FLSL…TFLA), 142–165 (YGNR…LLLI), and 177–200 (VVAT…GWSM). 2 residues coordinate Mg(2+): aspartate 76 and aspartate 80. The Proton acceptor role is filled by aspartate 80.

It belongs to the CDP-alcohol phosphatidyltransferase class-I family. Requires Mg(2+) as cofactor. Mn(2+) is required as a cofactor. As to expression, expressed in stems, flowers, shoots and roots. Present in epidermal tissues.

The protein resides in the membrane. It carries out the reaction a CDP-1,2-diacyl-sn-glycerol + myo-inositol = a 1,2-diacyl-sn-glycero-3-phospho-(1D-myo-inositol) + CMP + H(+). Functionally, catalyzes the biosynthesis of phosphatidylinositol (PtdIns) as well as PtdIns:inositol exchange reaction. May thus act to reduce an excessive cellular PtdIns content. The exchange activity is due to the reverse reaction of PtdIns synthase and is dependent on CMP, which is tightly bound to the enzyme. The chain is CDP-diacylglycerol--inositol 3-phosphatidyltransferase 1 (PIS1) from Arabidopsis thaliana (Mouse-ear cress).